Here is a 266-residue protein sequence, read N- to C-terminus: MAATNNVDPMHQFTVEPLHGLHIGKYDISFTNSALWMVIAMAALAIFMAGGRRKALIPGRWQMAVEVMTRFVNDMVSTNIGPKGRPFTPLIFTLFMFILFANLLGLVPLFGFLPGAEPFTSTSHVTVTATLAAIAFGTVLVVGFTRHGLGFFKLFVPHGTPMALIWLIPGIEAFSFILRPFSLALRLFVAMTAGHVLLEVLANFIVNPPVQSASPAFLAGYYTLVGIPTFLLMIGISALEFLVCAIQAYVFALLTSLYLNDAINLH.

The next 7 helical transmembrane spans lie at 28-48 (ISFT…AIFM), 90-110 (LIFT…VPLF), 125-145 (VTVT…VGFT), 158-178 (HGTP…SFIL), 187-207 (LFVA…FIVN), 216-236 (AFLA…MIGI), and 239-259 (LEFL…SLYL).

It belongs to the ATPase A chain family. As to quaternary structure, F-type ATPases have 2 components, CF(1) - the catalytic core - and CF(0) - the membrane proton channel. CF(1) has five subunits: alpha(3), beta(3), gamma(1), delta(1), epsilon(1). CF(0) has three main subunits: a(1), b(2) and c(9-12). The alpha and beta chains form an alternating ring which encloses part of the gamma chain. CF(1) is attached to CF(0) by a central stalk formed by the gamma and epsilon chains, while a peripheral stalk is formed by the delta and b chains.

The protein resides in the cell inner membrane. Functionally, key component of the proton channel; it plays a direct role in the translocation of protons across the membrane. The polypeptide is ATP synthase subunit a (Zymomonas mobilis subsp. mobilis (strain ATCC 31821 / ZM4 / CP4)).